We begin with the raw amino-acid sequence, 220 residues long: Sericin-2 (220 aa).

2 stretches are compositionally biased toward low complexity: residues serine 1–serine 131 and asparagine 141–alanine 155. The disordered stretch occupies residues serine 1 to alanine 220. The span at threonine 156–glycine 165 shows a compositional bias: polar residues. The span at serine 166–alanine 220 shows a compositional bias: low complexity.

As to expression, produced exclusively in the middle (MSG) section of silk glands.

The protein resides in the secreted. In terms of biological role, provides the silk fibroin thread with a sticky coating. Acts as a cement by sticking silk threads together. This is Sericin-2 (SER2) from Galleria mellonella (Greater wax moth).